Consider the following 432-residue polypeptide: Isocitrate lyase (432 aa).

Positions 1–24 (MSNVGKPRTAQEIQQDWDTNPRWN) are disordered. A compositionally biased stretch (polar residues) spans 11–22 (QEIQQDWDTNPR). Residue 93-95 (SGW) participates in substrate binding. D155 is a binding site for Mg(2+). The active-site Proton acceptor is C193. Substrate is bound by residues 194–195 (GH), R230, 315–319 (NCSPS), and T349.

This sequence belongs to the isocitrate lyase/PEP mutase superfamily. Isocitrate lyase family. Homotetramer. It depends on Mg(2+) as a cofactor.

The catalysed reaction is D-threo-isocitrate = glyoxylate + succinate. The protein operates within carbohydrate metabolism; glyoxylate cycle; (S)-malate from isocitrate: step 1/2. Inhibited by 3-phosphoglycerate, 6-phosphogluconate, phosphoenolpyruvate (PEP), fructose 1,6-bisphosphate, glycolate, oxalate, and itaconate. Functionally, involved in the metabolic adaptation in response to environmental changes. Catalyzes the reversible formation of succinate and glyoxylate from isocitrate, a key step of the glyoxylate cycle, which operates as an anaplerotic route for replenishing the tricarboxylic acid cycle during growth on fatty acid substrates. This is Isocitrate lyase from Corynebacterium glutamicum (strain ATCC 13032 / DSM 20300 / JCM 1318 / BCRC 11384 / CCUG 27702 / LMG 3730 / NBRC 12168 / NCIMB 10025 / NRRL B-2784 / 534).